Consider the following 57-residue polypeptide: Large ribosomal subunit protein bL32 (57 aa).

It belongs to the bacterial ribosomal protein bL32 family.

This Streptomyces avermitilis (strain ATCC 31267 / DSM 46492 / JCM 5070 / NBRC 14893 / NCIMB 12804 / NRRL 8165 / MA-4680) protein is Large ribosomal subunit protein bL32.